The chain runs to 944 residues: Isoleucine--tRNA ligase (944 aa).

A 'HIGH' region motif is present at residues Pro58 to His68. An L-isoleucyl-5'-AMP-binding site is contributed by Glu563. Positions Lys604–Ser608 match the 'KMSKS' region motif. Lys607 contacts ATP. 4 residues coordinate Zn(2+): Cys907, Cys910, Cys927, and Cys930.

Belongs to the class-I aminoacyl-tRNA synthetase family. IleS type 1 subfamily. In terms of assembly, monomer. The cofactor is Zn(2+).

It localises to the cytoplasm. The enzyme catalyses tRNA(Ile) + L-isoleucine + ATP = L-isoleucyl-tRNA(Ile) + AMP + diphosphate. Catalyzes the attachment of isoleucine to tRNA(Ile). As IleRS can inadvertently accommodate and process structurally similar amino acids such as valine, to avoid such errors it has two additional distinct tRNA(Ile)-dependent editing activities. One activity is designated as 'pretransfer' editing and involves the hydrolysis of activated Val-AMP. The other activity is designated 'posttransfer' editing and involves deacylation of mischarged Val-tRNA(Ile). The chain is Isoleucine--tRNA ligase from Salmonella choleraesuis (strain SC-B67).